Reading from the N-terminus, the 500-residue chain is Cytochrome P450 71B22 (500 aa).

Residues 1–21 (MSISLYFLLLLPLFLIFFKKL) traverse the membrane as a helical segment. C441 is a binding site for heme.

It belongs to the cytochrome P450 family. It depends on heme as a cofactor.

The protein resides in the membrane. The polypeptide is Cytochrome P450 71B22 (CYP71B22) (Arabidopsis thaliana (Mouse-ear cress)).